The chain runs to 427 residues: Serine--tRNA ligase (427 aa).

Residue 231-233 participates in L-serine binding; sequence TAE. 262 to 264 serves as a coordination point for ATP; it reads RSE. L-serine is bound at residue E285. 349-352 provides a ligand contact to ATP; the sequence is EISS. S385 is a binding site for L-serine.

This sequence belongs to the class-II aminoacyl-tRNA synthetase family. Type-1 seryl-tRNA synthetase subfamily. In terms of assembly, homodimer. The tRNA molecule binds across the dimer.

Its subcellular location is the cytoplasm. The enzyme catalyses tRNA(Ser) + L-serine + ATP = L-seryl-tRNA(Ser) + AMP + diphosphate + H(+). It carries out the reaction tRNA(Sec) + L-serine + ATP = L-seryl-tRNA(Sec) + AMP + diphosphate + H(+). Its pathway is aminoacyl-tRNA biosynthesis; selenocysteinyl-tRNA(Sec) biosynthesis; L-seryl-tRNA(Sec) from L-serine and tRNA(Sec): step 1/1. Functionally, catalyzes the attachment of serine to tRNA(Ser). Is also able to aminoacylate tRNA(Sec) with serine, to form the misacylated tRNA L-seryl-tRNA(Sec), which will be further converted into selenocysteinyl-tRNA(Sec). The polypeptide is Serine--tRNA ligase (Sinorhizobium fredii (strain NBRC 101917 / NGR234)).